The following is a 153-amino-acid chain: Protein E6 (153 aa).

Zinc fingers lie at residues 37-73 (CHFC…CIKC) and 110-146 (CSEC…CRAC).

Belongs to the papillomaviridae E6 protein family. As to quaternary structure, forms homodimers. Interacts with ubiquitin-protein ligase UBE3A/E6-AP; this interaction stimulates UBE3A ubiquitin activity. Interacts with host BAK1.

Its subcellular location is the host cytoplasm. The protein localises to the host nucleus. Functionally, plays a major role in the induction and maintenance of cellular transformation. E6 associates with host UBE3A/E6-AP ubiquitin-protein ligase and modulates its activity. Protects host keratinocytes from apoptosis by mediating the degradation of host BAK1. May also inhibit host immune response. The sequence is that of Protein E6 from Micromys minutus papillomavirus (MmPV).